Reading from the N-terminus, the 171-residue chain is Shikimate kinase (171 aa).

14–19 serves as a coordination point for ATP; that stretch reads GAGKST. Serine 18 contacts Mg(2+). Substrate is bound by residues aspartate 36, arginine 60, and glycine 82. ATP is bound at residue arginine 120. Residue arginine 139 participates in substrate binding. Glutamine 156 contacts ATP.

This sequence belongs to the shikimate kinase family. As to quaternary structure, monomer. Mg(2+) serves as cofactor.

It localises to the cytoplasm. It catalyses the reaction shikimate + ATP = 3-phosphoshikimate + ADP + H(+). Its pathway is metabolic intermediate biosynthesis; chorismate biosynthesis; chorismate from D-erythrose 4-phosphate and phosphoenolpyruvate: step 5/7. Functionally, catalyzes the specific phosphorylation of the 3-hydroxyl group of shikimic acid using ATP as a cosubstrate. The protein is Shikimate kinase of Shewanella loihica (strain ATCC BAA-1088 / PV-4).